Consider the following 527-residue polypeptide: Protein TIC 56, chloroplastic (527 aa).

The N-terminal 48 residues, 1 to 48, are a transit peptide targeting the chloroplast; sequence MSSMNFNPFQNWFEKPPNPVPSINFVSLADSFFPKSQSPNFASIGLPK. A disordered region spans residues 43 to 67; the sequence is SIGLPKFSKKSPKPETAGTDEPGPY. Position 350 is a deamidated asparagine (Asn350). Positions 491–508 are enriched in basic and acidic residues; the sequence is RREEELREEDLKHYSGRT. The interval 491-527 is disordered; that stretch reads RREEELREEDLKHYSGRTDEDEEEEEEEDDDSNSKKD. Residues 509 to 521 are compositionally biased toward acidic residues; it reads DEDEEEEEEEDDD.

In terms of assembly, part of the Tic complex. Component of the 1-MD complex, composed of TIC20-I, TIC214, TIC100 and TIC56. Interacts with the translocating preproteins. Hydrolysis of ATP is essential for the formation of this complex. The 1-MD complex interacts with TIC21.

The protein localises to the plastid. Its subcellular location is the chloroplast inner membrane. Its function is as follows. Involved in protein precursor import into chloroplasts. May be part of an intermediate translocation complex acting as a protein-conducting channel at the inner envelope. The sequence is that of Protein TIC 56, chloroplastic from Arabidopsis thaliana (Mouse-ear cress).